A 180-amino-acid chain; its full sequence is Large ribosomal subunit protein uL18m (180 aa).

It belongs to the universal ribosomal protein uL18 family. Component of the mitochondrial large ribosomal subunit (mt-LSU). Mature mammalian 55S mitochondrial ribosomes consist of a small (28S) and a large (39S) subunit. The 28S small subunit contains a 12S ribosomal RNA (12S mt-rRNA) and 30 different proteins. The 39S large subunit contains a 16S rRNA (16S mt-rRNA), a copy of mitochondrial valine transfer RNA (mt-tRNA(Val)), which plays an integral structural role, and 52 different proteins.

The protein resides in the mitochondrion. In terms of biological role, together with thiosulfate sulfurtransferase (TST), acts as a mitochondrial import factor for the cytosolic 5S rRNA. The precursor form shows RNA chaperone activity; is able to fold the 5S rRNA into an import-competent conformation that is recognized by rhodanese (TST). Both the cytoplasmic and mitochondrial forms are able to bind to the helix IV-loop D in the gamma domain of the 5S rRNA. This is Large ribosomal subunit protein uL18m (MRPL18) from Homo sapiens (Human).